A 195-amino-acid polypeptide reads, in one-letter code: Thymidine kinase (195 aa).

ATP contacts are provided by residues 8–15 and 86–89; these read GLMGSGKS and DESQ. The Proton acceptor role is filled by Glu87. Positions 146, 151, 184, and 187 each coordinate Zn(2+).

This sequence belongs to the thymidine kinase family. In terms of assembly, homotetramer.

Its subcellular location is the cytoplasm. It catalyses the reaction thymidine + ATP = dTMP + ADP + H(+). In Bacillus subtilis subsp. natto, this protein is Thymidine kinase (tdk).